We begin with the raw amino-acid sequence, 166 residues long: MAKVESQAGELQEKLIAVNRVSKTVKGGRIMSFTALTVVGDGNGRVGYGYGKAREVPAAIQKAMEQAKRNLSKVELNNGTLHHPVRGVHSGSSVFMKPASQGTGIIAGGAMRAVLEVAGIHNVLAKTYGSTNPINVVRATVDALVQGQSPAQIAAKRGLRVEEILG.

In terms of domain architecture, S5 DRBM spans 11-74 (LQEKLIAVNR…EQAKRNLSKV (64 aa)).

The protein belongs to the universal ribosomal protein uS5 family. Part of the 30S ribosomal subunit. Contacts proteins S4 and S8.

In terms of biological role, with S4 and S12 plays an important role in translational accuracy. Its function is as follows. Located at the back of the 30S subunit body where it stabilizes the conformation of the head with respect to the body. The chain is Small ribosomal subunit protein uS5 from Aeromonas salmonicida (strain A449).